The primary structure comprises 467 residues: Methylenetetrahydrofolate--tRNA-(uracil-5-)-methyltransferase TrmFO (467 aa).

Gly11 to Gly16 lines the FAD pocket.

This sequence belongs to the MnmG family. TrmFO subfamily. Requires FAD as cofactor.

It is found in the cytoplasm. It catalyses the reaction uridine(54) in tRNA + (6R)-5,10-methylene-5,6,7,8-tetrahydrofolate + NADH + H(+) = 5-methyluridine(54) in tRNA + (6S)-5,6,7,8-tetrahydrofolate + NAD(+). It carries out the reaction uridine(54) in tRNA + (6R)-5,10-methylene-5,6,7,8-tetrahydrofolate + NADPH + H(+) = 5-methyluridine(54) in tRNA + (6S)-5,6,7,8-tetrahydrofolate + NADP(+). Functionally, catalyzes the folate-dependent formation of 5-methyl-uridine at position 54 (M-5-U54) in all tRNAs. This chain is Methylenetetrahydrofolate--tRNA-(uracil-5-)-methyltransferase TrmFO, found in Prochlorococcus marinus (strain NATL1A).